The following is a 206-amino-acid chain: Small ribosomal subunit protein uS4 (206 aa).

The S4 RNA-binding domain maps to 96–157 (GRLDNVVYRM…KAKKQSRVRA (62 aa)).

This sequence belongs to the universal ribosomal protein uS4 family. As to quaternary structure, part of the 30S ribosomal subunit. Contacts protein S5. The interaction surface between S4 and S5 is involved in control of translational fidelity.

Functionally, one of the primary rRNA binding proteins, it binds directly to 16S rRNA where it nucleates assembly of the body of the 30S subunit. With S5 and S12 plays an important role in translational accuracy. In Sodalis glossinidius (strain morsitans), this protein is Small ribosomal subunit protein uS4.